The following is a 177-amino-acid chain: MSRVAKAPVVVPAGVDVKINGQVITIKGKNGELTRTLNDAVEVKHVDNALTFGPRDGYADGWAQAGTARALLNSMVIGVTEGFTKKLQLVGVGYRAAVKGNVVNLSLGFSHPVDHQLPAGITAECPTQTEIVLKGADKQVIGQVAADLRAYRRPEPYKGKGVRYADEVVRTKEAKKK.

Belongs to the universal ribosomal protein uL6 family. As to quaternary structure, part of the 50S ribosomal subunit.

Its function is as follows. This protein binds to the 23S rRNA, and is important in its secondary structure. It is located near the subunit interface in the base of the L7/L12 stalk, and near the tRNA binding site of the peptidyltransferase center. The polypeptide is Large ribosomal subunit protein uL6 (Salmonella arizonae (strain ATCC BAA-731 / CDC346-86 / RSK2980)).